We begin with the raw amino-acid sequence, 597 residues long: UvrABC system protein C (597 aa).

A GIY-YIG domain is found at 15–93 (NSPGVYQYFD…IKKHQPRFNV (79 aa)). A UVR domain is found at 207–242 (KDSLQRFRNQMKQHSEKMEFEDAQRIKNKIDVLENY).

Belongs to the UvrC family. As to quaternary structure, interacts with UvrB in an incision complex.

The protein resides in the cytoplasm. Its function is as follows. The UvrABC repair system catalyzes the recognition and processing of DNA lesions. UvrC both incises the 5' and 3' sides of the lesion. The N-terminal half is responsible for the 3' incision and the C-terminal half is responsible for the 5' incision. This Christiangramia forsetii (strain DSM 17595 / CGMCC 1.15422 / KT0803) (Gramella forsetii) protein is UvrABC system protein C.